A 478-amino-acid chain; its full sequence is Protein nucleotidyltransferase YdiU (478 aa).

ATP contacts are provided by Gly-84, Gly-86, Arg-87, Lys-107, Asp-119, Gly-120, Arg-170, and Arg-177. Asp-246 (proton acceptor) is an active-site residue. Residues Asn-247 and Asp-256 each contribute to the Mg(2+) site. ATP is bound at residue Asp-256.

Belongs to the SELO family. Requires Mg(2+) as cofactor. Mn(2+) is required as a cofactor.

The catalysed reaction is L-seryl-[protein] + ATP = 3-O-(5'-adenylyl)-L-seryl-[protein] + diphosphate. It carries out the reaction L-threonyl-[protein] + ATP = 3-O-(5'-adenylyl)-L-threonyl-[protein] + diphosphate. The enzyme catalyses L-tyrosyl-[protein] + ATP = O-(5'-adenylyl)-L-tyrosyl-[protein] + diphosphate. It catalyses the reaction L-histidyl-[protein] + UTP = N(tele)-(5'-uridylyl)-L-histidyl-[protein] + diphosphate. The catalysed reaction is L-seryl-[protein] + UTP = O-(5'-uridylyl)-L-seryl-[protein] + diphosphate. It carries out the reaction L-tyrosyl-[protein] + UTP = O-(5'-uridylyl)-L-tyrosyl-[protein] + diphosphate. Nucleotidyltransferase involved in the post-translational modification of proteins. It can catalyze the addition of adenosine monophosphate (AMP) or uridine monophosphate (UMP) to a protein, resulting in modifications known as AMPylation and UMPylation. This chain is Protein nucleotidyltransferase YdiU, found in Escherichia coli O7:K1 (strain IAI39 / ExPEC).